A 99-amino-acid chain; its full sequence is Malonate decarboxylase acyl carrier protein (99 aa).

Serine 25 is modified (O-(phosphoribosyl dephospho-coenzyme A)serine).

Belongs to the MdcC family. In terms of processing, covalently binds the prosthetic group of malonate decarboxylase.

The protein localises to the cytoplasm. In terms of biological role, subunit of malonate decarboxylase, it is an acyl carrier protein to which acetyl and malonyl thioester residues are bound via a 2'-(5''-phosphoribosyl)-3'-dephospho-CoA prosthetic group and turn over during the catalytic mechanism. The chain is Malonate decarboxylase acyl carrier protein from Pseudomonas savastanoi pv. phaseolicola (strain 1448A / Race 6) (Pseudomonas syringae pv. phaseolicola (strain 1448A / Race 6)).